The following is a 502-amino-acid chain: MKKRALISVFDKEGVLDFAKFLVSKDVEIVSTGGTYKYLKENGLNVIEINEVTDFPEMLDGRVKTLHPLVHAGILAIRDNEEHMNTLKGRNIHTIDYVVVNLYPFFEKVKEDLEFEEKVEFIDIGGPTMLRAAAKNFQDVVVISDKNDYKVVMEEIEANGETSYKTKKKLAGKVFNLMSAYDGAISNFLLADEEEEYPEYLSVSYKKMQSLRYGENSHQTAAVYASTMLDGAMNTFETLNGKELSYNNFKDVDIAWKCANEFDEPACCALKHNTPCGVAIGKDSYEAYMKAYEVDPTSIFGGIIGFNRKVDKKTAEEMVKIFLEVIAAPEYDEDALEVLKTKKNLRVLKFHNTPKADKYMVTVDGAMLVQEEDNKLVEEIKVVTEKKPTDEEMKDLLFGMKVVKYVKSNAIVVAHNGIALGIGGGQVNRIWPTEDALKRGKGATILASDAYFPFGDVAETAAKAGIKAIIQPGGSIRDQESIDVCNKYGISMVFTGYRHFKH.

Positions 1-144 constitute an MGS-like domain; sequence MKKRALISVF…KNFQDVVVIS (144 aa).

The protein belongs to the PurH family.

It catalyses the reaction (6R)-10-formyltetrahydrofolate + 5-amino-1-(5-phospho-beta-D-ribosyl)imidazole-4-carboxamide = 5-formamido-1-(5-phospho-D-ribosyl)imidazole-4-carboxamide + (6S)-5,6,7,8-tetrahydrofolate. The enzyme catalyses IMP + H2O = 5-formamido-1-(5-phospho-D-ribosyl)imidazole-4-carboxamide. Its pathway is purine metabolism; IMP biosynthesis via de novo pathway; 5-formamido-1-(5-phospho-D-ribosyl)imidazole-4-carboxamide from 5-amino-1-(5-phospho-D-ribosyl)imidazole-4-carboxamide (10-formyl THF route): step 1/1. The protein operates within purine metabolism; IMP biosynthesis via de novo pathway; IMP from 5-formamido-1-(5-phospho-D-ribosyl)imidazole-4-carboxamide: step 1/1. The chain is Bifunctional purine biosynthesis protein PurH from Clostridium beijerinckii (strain ATCC 51743 / NCIMB 8052) (Clostridium acetobutylicum).